Here is a 192-residue protein sequence, read N- to C-terminus: UPF0301 protein Bamb_0737 (192 aa).

It belongs to the UPF0301 (AlgH) family.

This chain is UPF0301 protein Bamb_0737, found in Burkholderia ambifaria (strain ATCC BAA-244 / DSM 16087 / CCUG 44356 / LMG 19182 / AMMD) (Burkholderia cepacia (strain AMMD)).